A 538-amino-acid polypeptide reads, in one-letter code: Syncytin-1 (538 aa).

Residues methionine 1–threonine 20 form the signal peptide. The Extracellular segment spans residues serine 31–glutamine 443. N-linked (GlcNAc...) asparagine glycosylation occurs at asparagine 169. Residues cysteine 186–cysteine 189 carry the CXXC motif. Intrachain disulfides connect cysteine 186–cysteine 189, cysteine 186–cysteine 405, and cysteine 397–cysteine 404. 5 N-linked (GlcNAc...) asparagine glycosylation sites follow: asparagine 208, asparagine 214, asparagine 234, asparagine 242, and asparagine 281. The tract at residues isoleucine 320–isoleucine 340 is fusion peptide. Positions leucine 380–threonine 396 are immunosuppression. The short motif at cysteine 397–cysteine 405 is the CX6CC element. Asparagine 409 carries N-linked (GlcNAc...) asparagine glycosylation. Residues tryptophan 444–phenylalanine 464 form a helical membrane-spanning segment. Positions glycine 465–lysine 484 are essential for the fusiogenic function. At glycine 465 to serine 538 the chain is on the cytoplasmic side. The disordered stretch occupies residues lysine 494 to serine 538.

It belongs to the gamma type-C retroviral envelope protein family. HERV class-I W env subfamily. The mature envelope protein (Env) consists of a trimer of SU-TM heterodimers attached probably by a labile interchain disulfide bond. Interacts with the C-type lectin CD209/DC-SIGN. Specific enzymatic cleavages in vivo yield mature proteins. Envelope glycoproteins are synthesized as an inactive precursor that is heavily N-glycosylated and processed likely by furin in the Golgi to yield the mature SU and TM proteins. The cleavage site between SU and TM requires the minimal sequence [KR]-X-[KR]-R. In terms of processing, the CXXC motif is highly conserved across a broad range of retroviral envelope proteins. It is thought to participate in the formation of a labile disulfide bond possibly with the CX6CC motif present in the transmembrane protein.

It localises to the cell membrane. The protein resides in the virion. Its function is as follows. This endogenous retroviral envelope protein has retained its original fusogenic properties and participates in trophoblast fusion and the formation of a syncytium during placenta morphogenesis. May recognize and induce fusion through binding of SLC1A4 and SLC1A5. Endogenous envelope proteins may have kept, lost or modified their original function during evolution. Retroviral envelope proteins mediate receptor recognition and membrane fusion during early infection. The surface protein (SU) mediates receptor recognition, while the transmembrane protein (TM) acts as a class I viral fusion protein. The protein may have at least 3 conformational states: pre-fusion native state, pre-hairpin intermediate state, and post-fusion hairpin state. During viral and target cell membrane fusion, the coiled coil regions (heptad repeats) assume a trimer-of-hairpins structure, positioning the fusion peptide in close proximity to the C-terminal region of the ectodomain. The formation of this structure appears to drive apposition and subsequent fusion of membranes. The chain is Syncytin-1 (ERVW-1) from Hylobates pileatus (Pileated gibbon).